A 445-amino-acid chain; its full sequence is NADH-quinone oxidoreductase subunit F (445 aa).

An NAD(+)-binding site is contributed by 61–70 (GRGGAGFATG). 177–224 (GAGAYICGEETALLDSLEGRRGQPRLRPPFPAVAGLYGCPTVINNVET) contributes to the FMN binding site. The [4Fe-4S] cluster site is built by cysteine 353, cysteine 356, cysteine 359, and cysteine 399.

The protein belongs to the complex I 51 kDa subunit family. It depends on FMN as a cofactor. The cofactor is [4Fe-4S] cluster.

The enzyme catalyses a quinone + NADH + 5 H(+)(in) = a quinol + NAD(+) + 4 H(+)(out). In terms of biological role, NDH-1 shuttles electrons from NADH, via FMN and iron-sulfur (Fe-S) centers, to quinones in the respiratory chain. The immediate electron acceptor for the enzyme in this species is believed to be menaquinone. Couples the redox reaction to proton translocation (for every two electrons transferred, four hydrogen ions are translocated across the cytoplasmic membrane), and thus conserves the redox energy in a proton gradient. The sequence is that of NADH-quinone oxidoreductase subunit F (nuoF) from Mycobacterium bovis (strain ATCC BAA-935 / AF2122/97).